The following is a 321-amino-acid chain: MSKPIVMERGVKYRDADKMALIPVKNVVTEREALLRKPEWMKIKLPADSSRIQGIKAAMRKNGLHSVCEEASCPNLAECFNHGTATFMILGAICTRRCPFCDVAHGRPVAPDANEPLKLAQTIADMALRYVVITSVDRDDLRDGGAQHFADCISAIREKSPSIKIETLVPDFRGRMDRALEILTATPPDVFNHNLENVPRVYRQVRPGADYNWSLKLLERFKEAHPHIPTKSGLMVGLGETNAEIIEVMRDLRRHGVTMLTLGQYLQPSRHHLPVQRYVSPDEFDEMKAEAMAMGFTHAACGPFVRSSYHADMQAKGEEVK.

Positions 68, 73, 79, 94, 98, 101, and 308 each coordinate [4Fe-4S] cluster. Residues 80-297 (FNHGTATFMI…KAEAMAMGFT (218 aa)) enclose the Radical SAM core domain.

Belongs to the radical SAM superfamily. Lipoyl synthase family. [4Fe-4S] cluster serves as cofactor.

It is found in the cytoplasm. The catalysed reaction is [[Fe-S] cluster scaffold protein carrying a second [4Fe-4S](2+) cluster] + N(6)-octanoyl-L-lysyl-[protein] + 2 oxidized [2Fe-2S]-[ferredoxin] + 2 S-adenosyl-L-methionine + 4 H(+) = [[Fe-S] cluster scaffold protein] + N(6)-[(R)-dihydrolipoyl]-L-lysyl-[protein] + 4 Fe(3+) + 2 hydrogen sulfide + 2 5'-deoxyadenosine + 2 L-methionine + 2 reduced [2Fe-2S]-[ferredoxin]. Its pathway is protein modification; protein lipoylation via endogenous pathway; protein N(6)-(lipoyl)lysine from octanoyl-[acyl-carrier-protein]: step 2/2. Functionally, catalyzes the radical-mediated insertion of two sulfur atoms into the C-6 and C-8 positions of the octanoyl moiety bound to the lipoyl domains of lipoate-dependent enzymes, thereby converting the octanoylated domains into lipoylated derivatives. This is Lipoyl synthase from Enterobacter sp. (strain 638).